A 5161-amino-acid polypeptide reads, in one-letter code: Nonribosomal peptide synthetase TES (5161 aa).

An adenylation 1 region spans residues 37–436; it reads EEQAIARPNA…GRKDSQTKVR (400 aa). In terms of domain architecture, Carrier 1 spans 569-645; the sequence is QPETEKEQIL…KLTSAAIPSV (77 aa). Residue Ser-606 is modified to O-(pantetheine 4'-phosphoryl)serine. A condensation 1 region spans residues 659-1098; the sequence is GHVAQSFAQG…LLCDVELSKL (440 aa). The adenylation 2 stretch occupies residues 1122-1522; sequence RQQTSLCPSR…GRMDGQVKIR (401 aa). The segment at 1630–1742 is methyltransferase (M) domain 1; it reads MNEWLDDTID…YLFKTTQQLL (113 aa). The Carrier 2 domain maps to 2068 to 2141; that stretch reads TRAESKIQQL…QLAAVAQEHV (74 aa). Ser-2102 carries the O-(pantetheine 4'-phosphoryl)serine modification. The segment at 2179 to 2593 is condensation 2; it reads EDIYPCSPLQ…MLTQDDEQQL (415 aa). Residues 2614–3010 form an adenylation 3 region; sequence DQAKSRPEAD…GRKDGQVKVR (397 aa). In terms of domain architecture, Carrier 3 spans 3139-3215; the sequence is KPETKHEMAL…RLANRLVDPP (77 aa). Ser-3176 is subject to O-(pantetheine 4'-phosphoryl)serine. Positions 3232–3668 are condensation 3; it reads LQSFAQGRLW…VVPLMTVEAH (437 aa). The tract at residues 3694 to 4098 is adenylation 4; it reads FRQQAAMQPS…GRIDGQVKIR (405 aa). The interval 4203-4329 is methyltransferase (M) domain 2; that stretch reads EMKEWLEETI…KVDGVKTLFF (127 aa). Residues 4643–4725 form the Carrier 4 domain; it reads RELSTAELKV…QFSQHEGEQK (83 aa). Ser-4680 bears the O-(pantetheine 4'-phosphoryl)serine mark. The segment at 4785 to 5093 is condensation 4; it reads FFLNLGTRVD…HQNLNEHPEF (309 aa).

Belongs to the NRP synthetase family.

It participates in phytotoxin biosynthesis. Functionally, nonribosomal peptide synthetase; part of the gene cluster that mediates the biosynthesis of the phytotoxin tentoxin, an inhibitor the F1-ATPase activity of chloroplasts, resulting in chlorosis in sensitive plants. Tentoxin is a cyclic tetrapeptide that consists of four amino acid residues: glycine (Gly), alanine (Ala), leucine (Leu), and dehydrophenylalanine (DPhe). In addition, both the Ala and DPhe residues are N-methylated. The nonribosomal peptide synthetase TES assembles tentoxin from the four substrate amino acids. The adenylation domains of each of the 4 modules are responsible for the activation of Gly, Ala, Leu and DPhe, respectively. In addition, the N-methyltransferase domains in the second and fourth modules of TES could be responsible for N-methylation of Ala and DPhe residues. Finally, the condensation domain located in the termination module probably catalyzes the formation of the intramolecular macrocyclization and then the release of tentoxin. The cytochrome P450 monooxygenase TES1 is predicted to be involved in the formation of DPhe. The protein is Nonribosomal peptide synthetase TES of Alternaria alternata (Alternaria rot fungus).